The primary structure comprises 379 residues: MSKSALLVLEDGTVFRGVSIGADGISVGEVVFNTSMTGYQEILTDPSYSQQIVTLTYPHIGNTGTTSEDEESSSIHAQGLVIRDLPLIASNFRSEQSLSDYLKSQNIVGIADIDTRKLTRILREKGAQNGCIVAGNNLDEALALAKAKEFPGLKGMDLAKEVTTKEAYQWKQGSWTLEGGLPEAKDDSELPYHVVAYDFGAKRNILRMLVDRGCRLTVVPAETSAEDVLALNPDGVFLSNGPGDPAPCTYAIEATKVFLEKGLPVFGICLGHQILALASGAKTVKMKFGHHGANHPVKDLDRNVVMITSQNHGFAADEATLPDNLRATHVSLFDGSLQGIHRTDKPAFSFQGHPEASPGPHDAAPLFDHFIELIKQHSA.

Residues 1–189 are CPSase; that stretch reads MSKSALLVLE…GLPEAKDDSE (189 aa). The L-glutamine site is built by S47, G241, and G243. In terms of domain architecture, Glutamine amidotransferase type-1 spans 193 to 379; sequence HVVAYDFGAK…FIELIKQHSA (187 aa). Residue C269 is the Nucleophile of the active site. Positions 270, 273, 311, 313, and 314 each coordinate L-glutamine. Catalysis depends on residues H353 and E355.

This sequence belongs to the CarA family. In terms of assembly, composed of two chains; the small (or glutamine) chain promotes the hydrolysis of glutamine to ammonia, which is used by the large (or ammonia) chain to synthesize carbamoyl phosphate. Tetramer of heterodimers (alpha,beta)4.

It catalyses the reaction hydrogencarbonate + L-glutamine + 2 ATP + H2O = carbamoyl phosphate + L-glutamate + 2 ADP + phosphate + 2 H(+). The catalysed reaction is L-glutamine + H2O = L-glutamate + NH4(+). Its pathway is amino-acid biosynthesis; L-arginine biosynthesis; carbamoyl phosphate from bicarbonate: step 1/1. It functions in the pathway pyrimidine metabolism; UMP biosynthesis via de novo pathway; (S)-dihydroorotate from bicarbonate: step 1/3. In terms of biological role, small subunit of the glutamine-dependent carbamoyl phosphate synthetase (CPSase). CPSase catalyzes the formation of carbamoyl phosphate from the ammonia moiety of glutamine, carbonate, and phosphate donated by ATP, constituting the first step of 2 biosynthetic pathways, one leading to arginine and/or urea and the other to pyrimidine nucleotides. The small subunit (glutamine amidotransferase) binds and cleaves glutamine to supply the large subunit with the substrate ammonia. In Vibrio vulnificus (strain YJ016), this protein is Carbamoyl phosphate synthase small chain.